The following is an 87-amino-acid chain: Large ribosomal subunit protein bL31B (87 aa).

Belongs to the bacterial ribosomal protein bL31 family. Type B subfamily. Part of the 50S ribosomal subunit.

In Paraburkholderia phymatum (strain DSM 17167 / CIP 108236 / LMG 21445 / STM815) (Burkholderia phymatum), this protein is Large ribosomal subunit protein bL31B.